The sequence spans 150 residues: 1,4-dihydroxy-2-naphthoyl-CoA hydrolase (150 aa).

Residue Asp19 is part of the active site.

Belongs to the 4-hydroxybenzoyl-CoA thioesterase family. DHNA-CoA hydrolase subfamily.

It catalyses the reaction 1,4-dihydroxy-2-naphthoyl-CoA + H2O = 1,4-dihydroxy-2-naphthoate + CoA + H(+). It participates in cofactor biosynthesis; phylloquinone biosynthesis. The protein operates within quinol/quinone metabolism; 1,4-dihydroxy-2-naphthoate biosynthesis; 1,4-dihydroxy-2-naphthoate from chorismate: step 7/7. Functionally, catalyzes the hydrolysis of 1,4-dihydroxy-2-naphthoyl-CoA (DHNA-CoA) to 1,4-dihydroxy-2-naphthoate (DHNA), a reaction involved in phylloquinone (vitamin K1) biosynthesis. In Prochlorococcus marinus (strain MIT 9215), this protein is 1,4-dihydroxy-2-naphthoyl-CoA hydrolase.